Consider the following 508-residue polypeptide: Phenylacetaldehyde synthase (508 aa).

Histidine 203 and histidine 318 together coordinate L-phenylalanine. Lysine 319 carries the post-translational modification N6-(pyridoxal phosphate)lysine. Phenylalanine 348 contacts L-phenylalanine.

Belongs to the group II decarboxylase family. In terms of assembly, homotetramer. The cofactor is pyridoxal 5'-phosphate.

It carries out the reaction L-phenylalanine + O2 + H2O + H(+) = 2-phenylacetaldehyde + H2O2 + NH4(+) + CO2. Bifunctional enzyme that catalyzes the decarboxylation of L-phenylalanine to produce 2-phenylethylamine, which is then oxidized to form 2-phenylacetaldehyde, a constituent of floral scent in petals. 2-phenylacetaldehyde is a precursor of 2-phenylethanol, another constituent of floral scent in petals. The polypeptide is Phenylacetaldehyde synthase (Rosa hybrid cultivar).